Reading from the N-terminus, the 423-residue chain is Glutamate-1-semialdehyde 2,1-aminomutase (423 aa).

N6-(pyridoxal phosphate)lysine is present on K266.

It belongs to the class-III pyridoxal-phosphate-dependent aminotransferase family. HemL subfamily. In terms of assembly, homodimer. It depends on pyridoxal 5'-phosphate as a cofactor.

Its subcellular location is the cytoplasm. The catalysed reaction is (S)-4-amino-5-oxopentanoate = 5-aminolevulinate. It functions in the pathway porphyrin-containing compound metabolism; protoporphyrin-IX biosynthesis; 5-aminolevulinate from L-glutamyl-tRNA(Glu): step 2/2. The chain is Glutamate-1-semialdehyde 2,1-aminomutase from Desulfovibrio desulfuricans (strain ATCC 27774 / DSM 6949 / MB).